We begin with the raw amino-acid sequence, 409 residues long: Thiaminase-1 (409 aa).

The signal sequence occupies residues 1 to 29; it reads MSKVKGFIYKPLMVMLALLLVVVSPAGAG. Cys-143 serves as the catalytic Nucleophile. The Proton acceptor role is filled by Glu-271.

In terms of assembly, monomer.

Its subcellular location is the secreted. The enzyme catalyses pyridine + thiamine = heteropyrithiamine + 5-(2-hydroxyethyl)-4-methylthiazole. Functionally, degrades thiamine by replacing its thiazole moiety with a wide range of nucleophiles. The sequence is that of Thiaminase-1 from Paenibacillus thiaminolyticus (Bacillus thiaminolyticus).